Here is a 532-residue protein sequence, read N- to C-terminus: Methionine--tRNA ligase (532 aa).

A 'HIGH' region motif is present at residues 16–26; sequence YYVNDVPHLGS. Cys-131, Cys-134, Cys-149, and His-152 together coordinate Zn(2+). The 'KMSKS' region signature appears at 305–309; that stretch reads KMGKS. Lys-308 lines the ATP pocket.

Belongs to the class-I aminoacyl-tRNA synthetase family. MetG type 2A subfamily. In terms of assembly, monomer. Zn(2+) is required as a cofactor.

The protein resides in the cytoplasm. It carries out the reaction tRNA(Met) + L-methionine + ATP = L-methionyl-tRNA(Met) + AMP + diphosphate. Its function is as follows. Is required not only for elongation of protein synthesis but also for the initiation of all mRNA translation through initiator tRNA(fMet) aminoacylation. The sequence is that of Methionine--tRNA ligase (metG) from Synechocystis sp. (strain ATCC 27184 / PCC 6803 / Kazusa).